A 490-amino-acid polypeptide reads, in one-letter code: MKLKRLYPPQKAVNSLHSETGTGCEVAGCPPLRKEALLFFAGWGMDETPFMHNLPPNKDLIICYDYRSLDFDSTLLSTYEGIYVVAWSMGVWAASQVLPDSNLPLKQSIAINGTPFPIDDMRGIPPAIFEGTLNNLNEATLQKFRRRMCGSGSAFQAFLEIAPQRPVEELKEELVAIGRQYSELPPSTFVWNKAIIGESDHIFPPKNQEQAWQKYCNEIQRYDGAHYDEKILKENLAPAASSKLLIAQRFTKAIGTYPHEARVQQQIARKMCSLLQQHLPAHSLRRVVEFGCGTGTYSRLLLRSFRPEHLLLNDLCEEMRHSCRDILNERVSFLPGDAEALDFPHGTELITSCSVLQWFEHPDAFFRKCENILNAQGYIAFSTFGKENMKEIRQLTGQGLAYRSREELTASLSALYDIVHTEEEVISLNFNNPMEVLYHLKQTGVTGTCNQSWTRSKLNLFCQEYERLFSPGKGSVSLTYHPIYIIAKKR.

The segment at 1 to 248 (MKLKRLYPPQ…AASSKLLIAQ (248 aa)) is unknown. Residues 249–490 (RFTKAIGTYP…HPIYIIAKKR (242 aa)) are malonyl-CoA O-methyltransferase.

Belongs to the methyltransferase superfamily.

The enzyme catalyses malonyl-[ACP] + S-adenosyl-L-methionine = malonyl-[ACP] methyl ester + S-adenosyl-L-homocysteine. It functions in the pathway cofactor biosynthesis; biotin biosynthesis. Functionally, converts the free carboxyl group of a malonyl-thioester to its methyl ester by transfer of a methyl group from S-adenosyl-L-methionine (SAM). It allows to synthesize pimeloyl-ACP via the fatty acid synthetic pathway. This is Malonyl-[acyl-carrier protein] O-methyltransferase (bioC) from Bacteroides fragilis (strain 638R).